Consider the following 121-residue polypeptide: RATEKSVKTNGPLKQKQTTFSAKKVTEKTVKAKSSVPASDDNYPEIEKFFPFNPLDFESFDLPEEHQIAHLPLNGVPLMVLREERELEQLLHLGPPSPLNMPSPPWESDVLQSPSSILSTL.

A disordered region spans residues 1-24 (RATEKSVKTNGPLKQKQTTFSAKK). Short sequence motifs (TEK-box) lie at residues 3–5 (TEK) and 26–28 (TEK). The disordered stretch occupies residues 93–121 (LGPPSPLNMPSPPWESDVLQSPSSILSTL). The SH3-binding signature appears at 95 to 105 (PPSPLNMPSPP). A compositionally biased stretch (pro residues) spans 95-105 (PPSPLNMPSPP). Ser-97 bears the Phosphoserine; by CDK1 mark. Positions 110 to 121 (VLQSPSSILSTL) are enriched in polar residues.

Belongs to the securin family. As to quaternary structure, interacts with the caspase-like ESPL1, and prevents its protease activity probably by covering its active site. Interacts with p53/TP53 and blocks its activity probably by blocking its binding to DNA. Interacts with the Ku 70 kDa subunit of ds-DNA kinase. Interacts with PTTG1IP. Interacts with RPS10 and DNAJA1. Phosphorylated by CDK1 during mitosis. Post-translationally, phosphorylated in vitro by ds-DNA kinase. In terms of processing, ubiquitinated through 'Lys-11' linkage of ubiquitin moieties by the anaphase promoting complex (APC) at the onset of anaphase, conducting to its degradation. 'Lys-11'-linked ubiquitination is mediated by the E2 ligase UBE2C/UBCH10.

Its subcellular location is the cytoplasm. It is found in the nucleus. Functionally, regulatory protein, which plays a central role in chromosome stability, in the p53/TP53 pathway, and DNA repair. Probably acts by blocking the action of key proteins. During the mitosis, it blocks Separase/ESPL1 function, preventing the proteolysis of the cohesin complex and the subsequent segregation of the chromosomes. At the onset of anaphase, it is ubiquitinated, conducting to its destruction and to the liberation of ESPL1. Its function is however not limited to a blocking activity, since it is required to activate ESPL1. Negatively regulates the transcriptional activity and related apoptosis activity of p53/TP53. The negative regulation of p53/TP53 may explain the strong transforming capability of the protein when it is overexpressed. May also play a role in DNA repair via its interaction with Ku, possibly by connecting DNA damage-response pathways with sister chromatid separation. This Sus scrofa (Pig) protein is Securin (PTTG1).